Reading from the N-terminus, the 315-residue chain is Ankyrin repeat domain-containing protein 54 (315 aa).

The tract at residues 1-49 is disordered; that stretch reads MDGSSPLLAAAGSDGDRSSSEGEYTLAGGPSAGDTEKREGESPMEAAGA. 4 ANK repeats span residues 124–153, 157–186, 190–219, and 223–255; these read HAVK…DPCA, KGRT…DPNQ, LGNT…RVDA, and AGRT…EVTQ.

It is found in the nucleus. Its subcellular location is the cytoplasm. It localises to the midbody. Plays an important role in regulating intracellular signaling events associated with erythroid terminal differentiation. The protein is Ankyrin repeat domain-containing protein 54 (ankrd54) of Danio rerio (Zebrafish).